The sequence spans 170 residues: MPLTWKDSGLRWYWVVVLVFLADQLSKQWVLANFDLFESVKLLPFFNFTYVRNYGAAFSFLSEAGGWQRWLFTLVAVGFSTLLTVWLRKQSASLWKLNLAYTLVIGGALGNLIDRLMHGFVVDFIDFYWGKSHYPAFNIADSAIFIGAVLIIWDSFFNSKSEQDKTEEVK.

3 consecutive transmembrane segments (helical) span residues 12–32, 67–87, and 93–113; these read WYWV…WVLA, WQRW…TVWL, and SLWK…GNLI. Residues aspartate 123 and aspartate 141 contribute to the active site. Residues 137–157 form a helical membrane-spanning segment; sequence FNIADSAIFIGAVLIIWDSFF.

This sequence belongs to the peptidase A8 family.

Its subcellular location is the cell inner membrane. The enzyme catalyses Release of signal peptides from bacterial membrane prolipoproteins. Hydrolyzes -Xaa-Yaa-Zaa-|-(S,diacylglyceryl)Cys-, in which Xaa is hydrophobic (preferably Leu), and Yaa (Ala or Ser) and Zaa (Gly or Ala) have small, neutral side chains.. Its pathway is protein modification; lipoprotein biosynthesis (signal peptide cleavage). In terms of biological role, this protein specifically catalyzes the removal of signal peptides from prolipoproteins. This is Lipoprotein signal peptidase from Shewanella sp. (strain MR-4).